Consider the following 129-residue polypeptide: MSASSERELYEAWVELLSWMREYAQAKGVRFEKEADFPDFIYRMERPYDLPTTIMTASLSDGLGEPFLLADVSPRHAKLKRIGLRLPRAHIHLHAHYEPGKGLVTGKIPLTKERFFALADRAREALAFA.

It belongs to the complex I Nqo15 family. NDH-1 is composed of 15 different subunits, Nqo1 to Nqo15. The complex has a L-shaped structure, with the hydrophobic arm (subunits Nqo7, Nqo8 and Nqo10 to Nqo14) embedded in the membrane and the hydrophilic peripheral arm (subunits Nqo1 to Nqo6, Nqo9 and Nqo15) protruding into the bacterial cytoplasm. The hydrophilic domain contains all the redox centers. Nqo15 is bound to the side of the complex near the N-terminus of Nqo3, where it interacts with subunits Nqo3, Nqo2, Nqo1, Nqo9 and Nqo4.

It is found in the cell membrane. It carries out the reaction a quinone + NADH + 5 H(+)(in) = a quinol + NAD(+) + 4 H(+)(out). NDH-1 shuttles electrons from NADH, via FMN and iron-sulfur (Fe-S) centers, to quinones in the respiratory chain. The immediate electron acceptor for the enzyme in this species is menaquinone. Couples the redox reaction to proton translocation (for every two electrons transferred, four hydrogen ions are translocated across the cytoplasmic membrane), and thus conserves the redox energy in a proton gradient required for the synthesis of ATP. The Nqo15 subunit has probably a role in complex stabilization, and may be also involved in the storage of iron for iron-sulfur cluster regeneration in the complex. This Thermus thermophilus (strain ATCC 27634 / DSM 579 / HB8) protein is NADH-quinone oxidoreductase subunit 15 (nqo15).